Here is a 472-residue protein sequence, read N- to C-terminus: Glutamyl-tRNA(Gln) amidotransferase subunit A (472 aa).

Active-site charge relay system residues include Lys-69 and Ser-144. Ser-168 acts as the Acyl-ester intermediate in catalysis.

It belongs to the amidase family. GatA subfamily. As to quaternary structure, heterotrimer of A, B and C subunits.

It catalyses the reaction L-glutamyl-tRNA(Gln) + L-glutamine + ATP + H2O = L-glutaminyl-tRNA(Gln) + L-glutamate + ADP + phosphate + H(+). Its function is as follows. Allows the formation of correctly charged Gln-tRNA(Gln) through the transamidation of misacylated Glu-tRNA(Gln) in organisms which lack glutaminyl-tRNA synthetase. The reaction takes place in the presence of glutamine and ATP through an activated gamma-phospho-Glu-tRNA(Gln). The sequence is that of Glutamyl-tRNA(Gln) amidotransferase subunit A from Sulfurisphaera tokodaii (strain DSM 16993 / JCM 10545 / NBRC 100140 / 7) (Sulfolobus tokodaii).